Reading from the N-terminus, the 387-residue chain is Anhydro-N-acetylmuramic acid kinase (387 aa).

An ATP-binding site is contributed by Gly-9–Asp-16.

The protein belongs to the anhydro-N-acetylmuramic acid kinase family.

The catalysed reaction is 1,6-anhydro-N-acetyl-beta-muramate + ATP + H2O = N-acetyl-D-muramate 6-phosphate + ADP + H(+). Its pathway is amino-sugar metabolism; 1,6-anhydro-N-acetylmuramate degradation. It participates in cell wall biogenesis; peptidoglycan recycling. Its function is as follows. Catalyzes the specific phosphorylation of 1,6-anhydro-N-acetylmuramic acid (anhMurNAc) with the simultaneous cleavage of the 1,6-anhydro ring, generating MurNAc-6-P. Is required for the utilization of anhMurNAc either imported from the medium or derived from its own cell wall murein, and thus plays a role in cell wall recycling. In Synechocystis sp. (strain ATCC 27184 / PCC 6803 / Kazusa), this protein is Anhydro-N-acetylmuramic acid kinase.